A 722-amino-acid chain; its full sequence is Zinc finger BED domain-containing protein RICESLEEPER 2 (722 aa).

The BED-type zinc-finger motif lies at 66–134 (RKKSLVWEHF…QEHKLALTPA (69 aa)). Residues Cys89, Cys92, His113, and His127 each contribute to the Zn(2+) site. The tract at residues 572-592 (VEQGDGNNAPASENGTQATAP) is disordered. Positions 576–592 (DGNNAPASENGTQATAP) are enriched in polar residues. Positions 617-702 (ELEQYLDESL…EALVCAKDWL (86 aa)) are HATC (Hobo-Ac-Tam3) domain.

In terms of assembly, homodimer.

It localises to the nucleus. Transposase-like protein that is essential for plant growth and development. May regulate global gene expression by recruiting other cellular factors. In Oryza sativa subsp. japonica (Rice), this protein is Zinc finger BED domain-containing protein RICESLEEPER 2.